The following is a 149-amino-acid chain: Nucleoside diphosphate kinase (149 aa).

ATP contacts are provided by Lys-9, Phe-57, Arg-85, Thr-91, Arg-102, and Asn-112. Residue His-115 is the Pros-phosphohistidine intermediate of the active site.

Belongs to the NDK family. As to quaternary structure, homotetramer. Requires Mg(2+) as cofactor.

Its subcellular location is the cytoplasm. It carries out the reaction a 2'-deoxyribonucleoside 5'-diphosphate + ATP = a 2'-deoxyribonucleoside 5'-triphosphate + ADP. The enzyme catalyses a ribonucleoside 5'-diphosphate + ATP = a ribonucleoside 5'-triphosphate + ADP. In terms of biological role, major role in the synthesis of nucleoside triphosphates other than ATP. The ATP gamma phosphate is transferred to the NDP beta phosphate via a ping-pong mechanism, using a phosphorylated active-site intermediate. The chain is Nucleoside diphosphate kinase from Nostoc sp. (strain PCC 7120 / SAG 25.82 / UTEX 2576).